A 256-amino-acid chain; its full sequence is Thiazole synthase (256 aa).

The active-site Schiff-base intermediate with DXP is the lysine 95. 1-deoxy-D-xylulose 5-phosphate contacts are provided by residues glycine 156, 182–183 (AG), and 204–205 (NT).

It belongs to the ThiG family. In terms of assembly, homotetramer. Forms heterodimers with either ThiH or ThiS.

Its subcellular location is the cytoplasm. It carries out the reaction [ThiS sulfur-carrier protein]-C-terminal-Gly-aminoethanethioate + 2-iminoacetate + 1-deoxy-D-xylulose 5-phosphate = [ThiS sulfur-carrier protein]-C-terminal Gly-Gly + 2-[(2R,5Z)-2-carboxy-4-methylthiazol-5(2H)-ylidene]ethyl phosphate + 2 H2O + H(+). It participates in cofactor biosynthesis; thiamine diphosphate biosynthesis. Its function is as follows. Catalyzes the rearrangement of 1-deoxy-D-xylulose 5-phosphate (DXP) to produce the thiazole phosphate moiety of thiamine. Sulfur is provided by the thiocarboxylate moiety of the carrier protein ThiS. In vitro, sulfur can be provided by H(2)S. The sequence is that of Thiazole synthase from Cronobacter sakazakii (strain ATCC BAA-894) (Enterobacter sakazakii).